Reading from the N-terminus, the 488-residue chain is Proline--tRNA ligase (488 aa).

This sequence belongs to the class-II aminoacyl-tRNA synthetase family. ProS type 3 subfamily. In terms of assembly, homodimer.

Its subcellular location is the cytoplasm. It catalyses the reaction tRNA(Pro) + L-proline + ATP = L-prolyl-tRNA(Pro) + AMP + diphosphate. Catalyzes the attachment of proline to tRNA(Pro) in a two-step reaction: proline is first activated by ATP to form Pro-AMP and then transferred to the acceptor end of tRNA(Pro). This chain is Proline--tRNA ligase, found in Pyrobaculum islandicum (strain DSM 4184 / JCM 9189 / GEO3).